The sequence spans 395 residues: Putative nickel insertion protein (395 aa).

Belongs to the LarC family.

The protein is Putative nickel insertion protein of Archaeoglobus fulgidus (strain ATCC 49558 / DSM 4304 / JCM 9628 / NBRC 100126 / VC-16).